A 66-amino-acid polypeptide reads, in one-letter code: MDPPARKEKPKVKEPVSRIEKAKQKSAQQELKQRQRAEIYALNRVMTELEQQQFDEFCKQMQPPGE.

Positions 1-23 (MDPPARKEKPKVKEPVSRIEKAK) are enriched in basic and acidic residues. Residues 1 to 32 (MDPPARKEKPKVKEPVSRIEKAKQKSAQQELK) are disordered. A coiled-coil region spans residues 5-52 (ARKEKPKVKEPVSRIEKAKQKSAQQELKQRQRAEIYALNRVMTELEQQ).

This sequence belongs to the SVBP family. As to quaternary structure, interacts with VASH1 and VASH2.

It is found in the cytoplasm. The protein localises to the secreted. It localises to the cytoskeleton. Functionally, enhances the tyrosine carboxypeptidase activity of VASH1 and VASH2, thereby promoting the removal of the C-terminal tyrosine residue of alpha-tubulin. Also required to enhance the solubility and secretion of VASH1 and VASH2. Plays a role in axon and excitatory synapse formation. In Bos taurus (Bovine), this protein is Small vasohibin-binding protein.